The chain runs to 406 residues: Gustatory receptor for sugar taste 64b (406 aa).

Residues 1 to 47 (MPQGETFHRAVSNVLFISQIYGLLPVSNVRALDVADIRFRWCSPRIL) lie on the Cytoplasmic side of the membrane. The helical transmembrane segment at 48–68 (YSLLIGILNLSEFGAVINYVI) threads the bilayer. Residues 69–79 (KVTINFHTSST) lie on the Extracellular side of the membrane. A helical membrane pass occupies residues 80–100 (LSLYIVCLLEHLFFWRLAIQW). The Cytoplasmic portion of the chain corresponds to 101 to 130 (PRIMRTWHGVEQLFLRVPYRFYGEYRIKRR). The helical transmembrane segment at 131-151 (IYIVFTIVMSSALVEHCLLLG) threads the bilayer. The Extracellular portion of the chain corresponds to 152–183 (NSFHLSNMERTQCKINVTYFESIYKWERPHLY). The N-linked (GlcNAc...) asparagine glycan is linked to Asn-167. Residues 184–204 (MILPYHFWMLPILEWVNQTIA) form a helical membrane-spanning segment. The Cytoplasmic portion of the chain corresponds to 205 to 265 (YPRSFTDCFI…KRLVHLLDAA (61 aa)). The chain crosses the membrane as a helical span at residues 266–286 (IAPLVLLAFGNNMSFICFQLF). Over 287–290 (NSFK) the chain is Extracellular. The chain crosses the membrane as a helical span at residues 291–311 (NIGVDFLVMLAFWYSLGFAVV). At 312–370 (RTLLTIFVASSINDYERKIVTALRDVPSRAWSIEVQRFSEQLGNDTTALSGSGFFYLTR) the chain is on the cytoplasmic side. Residues 371–391 (SLVLAMGTTIITYELMISDVI) traverse the membrane as a helical segment. Residues 392-406 (NQGSIRQKTQYCREY) lie on the Extracellular side of the membrane.

It belongs to the insect chemoreceptor superfamily. Gustatory receptor (GR) family. Gr5a subfamily. Expressed in Gr5a-expressing sugar-sensing cells.

The protein resides in the cell membrane. Functionally, one of the few identified sugar gustatory receptors identified so far and which promotes the starvation-induced increase of feeding motivation. The chain is Gustatory receptor for sugar taste 64b (Gr64b) from Drosophila melanogaster (Fruit fly).